A 256-amino-acid polypeptide reads, in one-letter code: Matrix protein (256 aa).

Positions 1–110 are interaction with M2-1; sequence METYVNKLHE…KLAYDVTTPC (110 aa). Positions 110 to 183 are nuclear targeting and binding to host importin KPNB1; sequence CEIKACSLTC…LNTLENITTT (74 aa). The Nuclear export signal signature appears at 194 to 206; sequence IIPYSGLLLVITV. Thr205 is modified (phosphothreonine; by host CK2).

Belongs to the pneumovirinae M protein family. In terms of assembly, forms dimers. Forms higher-order oligomers. Interacts with glycoprotein G (via N-terminus). Interacts with protein M2-1; this interaction directs the matrix protein localization to cytoplasmic inclusions comprising viral proteins L, N, P, and M2-1 and mediates the matrix protein association with the nucleocapsid. Interacts with host importin KPNB1; this interaction mediates nuclear import of the matrix protein early during infection. Interacts with host AP3M1; this interaction plays an essential role in trafficking the matrix protein in host cells. Interacts with host CAV1; this interaction probably facilitates viral budding. Interacts with host CFL1; this interaction probably facilitates viral replication. Interacts with host ZNF502; this interaction probably facilitates viral release. Interacts with host RACK1. Phosphorylation is important for oligomerization.

Its subcellular location is the virion. The protein localises to the host cytoplasm. It localises to the host nucleus. It is found in the host cell membrane. Its function is as follows. Plays a crucial role in virus assembly into filaments and budding. Early in infection, localizes in the nucleus where it inhibits host cell transcription through direct binding to host chromatin. Later in infection, traffics to the cytoplasm through the action of host CRM1 to associate with inclusion bodies, the site of viral transcription and replication. During virus assembly and budding, acts as a bridge between the nucleocapsid and the lipid bilayer. Also plays a role in the inhibition of host interferon-beta response in a RACK1-dependent manner. The chain is Matrix protein (M) from Homo sapiens (Human).